The sequence spans 576 residues: Proteinaceous RNase P 3 (576 aa).

Basic and acidic residues predominate over residues 65-75 (NRRSRHDDESP). Residues 65-88 (NRRSRHDDESPKNPNKKKKGNRNP) are disordered. PPR repeat units follow at residues 88-123 (PEKS…DIRL), 129-166 (QSLL…GISP), 167-201 (NESS…GGVS), and 204-238 (RLRT…GIVL). Residues 335–570 (SSAGKCLSCD…KEESLRSWMC (236 aa)) enclose the PRORP domain. The Zn(2+) site is built by cysteine 340 and cysteine 343. Residues aspartate 402, aspartate 480, aspartate 481, and aspartate 499 each contribute to the Mn(2+) site. 2 residues coordinate Zn(2+): histidine 553 and cysteine 570.

Belongs to the PPR family. P subfamily. The cofactor is Mg(2+). Mn(2+) serves as cofactor.

The protein localises to the nucleus. The catalysed reaction is Endonucleolytic cleavage of RNA, removing 5'-extranucleotides from tRNA precursor.. In terms of biological role, endonuclease RNase P responsible for the 5' maturation of tRNA precursors. Also involved in the maturation of mRNA and small nucleolar RNA (snoRNA). This is Proteinaceous RNase P 3 (PRORP3) from Arabidopsis thaliana (Mouse-ear cress).